The following is a 425-amino-acid chain: Protein translocase subunit SecY (425 aa).

Transmembrane regions (helical) follow at residues 15-35 (LLSL…VPGI), 62-82 (TVVV…SIIM), 113-131 (LLTL…FYLK), 139-159 (LVLA…VLWL), 168-188 (LGNG…PGFV), 201-221 (IGSW…IVLL), 266-286 (PIIL…LGLL), 304-324 (IIYW…YSTI), 364-384 (LLGA…QAIL), and 385-405 (SLSG…GVIL).

The protein belongs to the SecY/SEC61-alpha family. Component of the plastid Sec protein translocase complex, which is composed of at least SecY, SecE and SecG.

It is found in the plastid. The protein localises to the chloroplast thylakoid membrane. In terms of biological role, the central subunit of the protein translocation channel SecYE. Consists of two halves formed by TMs 1-5 and 6-10. These two domains form a lateral gate at the front which open onto the bilayer between TMs 2 and 7, and are clamped together by SecE at the back. The channel is closed by both a pore ring composed of hydrophobic SecY resides and a short helix (helix 2A) on the extracellular side of the membrane which forms a plug. The chain is Protein translocase subunit SecY from Trieres chinensis (Marine centric diatom).